We begin with the raw amino-acid sequence, 265 residues long: Acrosomal protein SP-10 (265 aa).

Positions 1–21 (MNRFLLLMSLYLLGSARGTSS) are cleaved as a signal peptide. Positions 62–181 (LNTLSEHGSS…EQASGAPISS (120 aa)) are disordered. A run of 16 repeats spans residues 66 to 70 (SEHGS), 71 to 75 (SEHGS), 85 to 88 (SGEH), 91 to 95 (SEHAS), 110 to 114 (VGEQP), 115 to 119 (SGEQP), 120 to 123 (SGEH), 125 to 129 (SGEQP), 135 to 139 (SGEQP), 140 to 144 (SDEQP), 145 to 148 (SGEH), 150 to 154 (SGEQP), 155 to 159 (SGEQA), 160 to 164 (SGEQP), 165 to 168 (SGEH), and 170 to 174 (SGEQA). The interval 66-95 (SEHGSSEHGSSKHTVAEHTSGEHAESEHAS) is 3 X 5 AA repeats of S-E-H-[GA]-S. Over residues 69–110 (GSSEHGSSKHTVAEHTSGEHAESEHASGEPAATEHAEGEHTV) the composition is skewed to basic and acidic residues. Residues 85 to 168 (SGEHAESEHA…ASGEQPSGEH (84 aa)) are 4 X 4 AA repeats of S-G-E-H. A 9 X 5 AA repeats of [SV]-G-E-Q-[PSA] region spans residues 110–174 (VGEQPSGEQP…SGEHASGEQA (65 aa)). A compositionally biased stretch (polar residues) spans 152–163 (EQPSGEQASGEQ). Residue Asn258 is glycosylated (N-linked (GlcNAc...) asparagine).

Testis.

It localises to the cytoplasmic vesicle. The protein localises to the secretory vesicle. It is found in the acrosome. This Homo sapiens (Human) protein is Acrosomal protein SP-10 (ACRV1).